The following is a 115-amino-acid chain: Large ribosomal subunit protein bL20 (115 aa).

It belongs to the bacterial ribosomal protein bL20 family.

Functionally, binds directly to 23S ribosomal RNA and is necessary for the in vitro assembly process of the 50S ribosomal subunit. It is not involved in the protein synthesizing functions of that subunit. This is Large ribosomal subunit protein bL20 from Chlorobium chlorochromatii (strain CaD3).